Here is a 303-residue protein sequence, read N- to C-terminus: tRNA dimethylallyltransferase (303 aa).

13 to 20 serves as a coordination point for ATP; it reads GPTASGKS. Residue 15-20 coordinates substrate; that stretch reads TASGKS. 2 interaction with substrate tRNA regions span residues 38–41 and 162–166; these read DSMQ and QRLLR.

This sequence belongs to the IPP transferase family. As to quaternary structure, monomer. The cofactor is Mg(2+).

It catalyses the reaction adenosine(37) in tRNA + dimethylallyl diphosphate = N(6)-dimethylallyladenosine(37) in tRNA + diphosphate. Its function is as follows. Catalyzes the transfer of a dimethylallyl group onto the adenine at position 37 in tRNAs that read codons beginning with uridine, leading to the formation of N6-(dimethylallyl)adenosine (i(6)A). This is tRNA dimethylallyltransferase from Methylocella silvestris (strain DSM 15510 / CIP 108128 / LMG 27833 / NCIMB 13906 / BL2).